A 151-amino-acid chain; its full sequence is 3-hydroxyacyl-[acyl-carrier-protein] dehydratase FabZ (151 aa).

Residue His-54 is part of the active site.

This sequence belongs to the thioester dehydratase family. FabZ subfamily.

The protein localises to the cytoplasm. It carries out the reaction a (3R)-hydroxyacyl-[ACP] = a (2E)-enoyl-[ACP] + H2O. Functionally, involved in unsaturated fatty acids biosynthesis. Catalyzes the dehydration of short chain beta-hydroxyacyl-ACPs and long chain saturated and unsaturated beta-hydroxyacyl-ACPs. This is 3-hydroxyacyl-[acyl-carrier-protein] dehydratase FabZ from Pectobacterium atrosepticum (strain SCRI 1043 / ATCC BAA-672) (Erwinia carotovora subsp. atroseptica).